The following is a 363-amino-acid chain: Carbamoyl phosphate synthase small chain (363 aa).

Residues 1 to 172 are CPSase; that stretch reads MTKRILMLED…AFASPGDGKR (172 aa). L-glutamine contacts are provided by S46, G220, and G222. Residues 172 to 359 form the Glutamine amidotransferase type-1 domain; the sequence is RVVLVDYGVK…MEMMNGKEEG (188 aa). C247 functions as the Nucleophile in the catalytic mechanism. L-glutamine is bound by residues L248, Q251, N289, G291, and Y292. Catalysis depends on residues H332 and E334.

It belongs to the CarA family. Composed of two chains; the small (or glutamine) chain promotes the hydrolysis of glutamine to ammonia, which is used by the large (or ammonia) chain to synthesize carbamoyl phosphate. Tetramer of heterodimers (alpha,beta)4.

It catalyses the reaction hydrogencarbonate + L-glutamine + 2 ATP + H2O = carbamoyl phosphate + L-glutamate + 2 ADP + phosphate + 2 H(+). The catalysed reaction is L-glutamine + H2O = L-glutamate + NH4(+). It participates in amino-acid biosynthesis; L-arginine biosynthesis; carbamoyl phosphate from bicarbonate: step 1/1. It functions in the pathway pyrimidine metabolism; UMP biosynthesis via de novo pathway; (S)-dihydroorotate from bicarbonate: step 1/3. Small subunit of the glutamine-dependent carbamoyl phosphate synthetase (CPSase). CPSase catalyzes the formation of carbamoyl phosphate from the ammonia moiety of glutamine, carbonate, and phosphate donated by ATP, constituting the first step of 2 biosynthetic pathways, one leading to arginine and/or urea and the other to pyrimidine nucleotides. The small subunit (glutamine amidotransferase) binds and cleaves glutamine to supply the large subunit with the substrate ammonia. In Listeria monocytogenes serotype 4b (strain F2365), this protein is Carbamoyl phosphate synthase small chain.